We begin with the raw amino-acid sequence, 212 residues long: MQQEIMEAVKKAKELSRPRNFTQSMDVILNIKDLDVNKPENRFDEEVSLPNGRGKDVKIAVIADGELALQAKNAGADLVITKDELEELGKNRKEAKKLANQYEFFVAQADMMPLVGRFMGPVLGPRKKMPKPVPATINPEPILNKLRDTVKVRIKDQPVVHTVVGTEDMDDEKLAENIEAVLQTIDRKLEKGRNQLKSMYVKTTMGPVVRVI.

Belongs to the universal ribosomal protein uL1 family. Part of the 50S ribosomal subunit.

Binds directly to 23S rRNA. Probably involved in E site tRNA release. Functionally, protein L1 is also a translational repressor protein, it controls the translation of its operon by binding to its mRNA. The sequence is that of Large ribosomal subunit protein uL1 from Methanothermobacter thermautotrophicus (strain ATCC 29096 / DSM 1053 / JCM 10044 / NBRC 100330 / Delta H) (Methanobacterium thermoautotrophicum).